We begin with the raw amino-acid sequence, 103 residues long: Pyrimidine/purine nucleoside phosphorylase (103 aa).

Belongs to the nucleoside phosphorylase PpnP family.

It catalyses the reaction a purine D-ribonucleoside + phosphate = a purine nucleobase + alpha-D-ribose 1-phosphate. The enzyme catalyses adenosine + phosphate = alpha-D-ribose 1-phosphate + adenine. The catalysed reaction is cytidine + phosphate = cytosine + alpha-D-ribose 1-phosphate. It carries out the reaction guanosine + phosphate = alpha-D-ribose 1-phosphate + guanine. It catalyses the reaction inosine + phosphate = alpha-D-ribose 1-phosphate + hypoxanthine. The enzyme catalyses thymidine + phosphate = 2-deoxy-alpha-D-ribose 1-phosphate + thymine. The catalysed reaction is uridine + phosphate = alpha-D-ribose 1-phosphate + uracil. It carries out the reaction xanthosine + phosphate = alpha-D-ribose 1-phosphate + xanthine. Functionally, catalyzes the phosphorolysis of diverse nucleosides, yielding D-ribose 1-phosphate and the respective free bases. Can use uridine, adenosine, guanosine, cytidine, thymidine, inosine and xanthosine as substrates. Also catalyzes the reverse reactions. The sequence is that of Pyrimidine/purine nucleoside phosphorylase from Shewanella baltica (strain OS155 / ATCC BAA-1091).